Consider the following 344-residue polypeptide: Methionine import ATP-binding protein MetN (344 aa).

The ABC transporter domain occupies 2 to 241 (IEINRVNKVF…PKTELARKFI (240 aa)). Residue 38–45 (GSSGAGKS) coordinates ATP.

The protein belongs to the ABC transporter superfamily. Methionine importer (TC 3.A.1.24) family. In terms of assembly, the complex is composed of two ATP-binding proteins (MetN), two transmembrane proteins (MetI) and a solute-binding protein (MetQ).

It localises to the cell inner membrane. It carries out the reaction L-methionine(out) + ATP + H2O = L-methionine(in) + ADP + phosphate + H(+). The catalysed reaction is D-methionine(out) + ATP + H2O = D-methionine(in) + ADP + phosphate + H(+). Its function is as follows. Part of the ABC transporter complex MetNIQ involved in methionine import. Responsible for energy coupling to the transport system. The sequence is that of Methionine import ATP-binding protein MetN from Photobacterium profundum (strain SS9).